Consider the following 326-residue polypeptide: Malate dehydrogenase (326 aa).

11 to 17 (GAAGQIG) lines the NAD(+) pocket. Residues R92 and R98 each coordinate substrate. NAD(+) contacts are provided by residues N105, Q112, and 129–131 (VGN). Positions 131 and 162 each coordinate substrate. The active-site Proton acceptor is H187.

This sequence belongs to the LDH/MDH superfamily. MDH type 2 family.

It catalyses the reaction (S)-malate + NAD(+) = oxaloacetate + NADH + H(+). Functionally, catalyzes the reversible oxidation of malate to oxaloacetate. This is Malate dehydrogenase from Chromobacterium violaceum (strain ATCC 12472 / DSM 30191 / JCM 1249 / CCUG 213 / NBRC 12614 / NCIMB 9131 / NCTC 9757 / MK).